A 345-amino-acid chain; its full sequence is Holliday junction branch migration complex subunit RuvB (345 aa).

Residues L4–Y185 are large ATPase domain (RuvB-L). Residues L24, R25, G66, K69, T70, T71, E132 to Y134, R175, Y185, and R222 each bind ATP. T70 is a binding site for Mg(2+). Residues N186 to E256 form a small ATPAse domain (RuvB-S) region. The interval K259–I345 is head domain (RuvB-H). DNA is bound by residues R314 and R319.

It belongs to the RuvB family. In terms of assembly, homohexamer. Forms an RuvA(8)-RuvB(12)-Holliday junction (HJ) complex. HJ DNA is sandwiched between 2 RuvA tetramers; dsDNA enters through RuvA and exits via RuvB. An RuvB hexamer assembles on each DNA strand where it exits the tetramer. Each RuvB hexamer is contacted by two RuvA subunits (via domain III) on 2 adjacent RuvB subunits; this complex drives branch migration. In the full resolvosome a probable DNA-RuvA(4)-RuvB(12)-RuvC(2) complex forms which resolves the HJ.

It is found in the cytoplasm. It catalyses the reaction ATP + H2O = ADP + phosphate + H(+). Its function is as follows. The RuvA-RuvB-RuvC complex processes Holliday junction (HJ) DNA during genetic recombination and DNA repair, while the RuvA-RuvB complex plays an important role in the rescue of blocked DNA replication forks via replication fork reversal (RFR). RuvA specifically binds to HJ cruciform DNA, conferring on it an open structure. The RuvB hexamer acts as an ATP-dependent pump, pulling dsDNA into and through the RuvAB complex. RuvB forms 2 homohexamers on either side of HJ DNA bound by 1 or 2 RuvA tetramers; 4 subunits per hexamer contact DNA at a time. Coordinated motions by a converter formed by DNA-disengaged RuvB subunits stimulates ATP hydrolysis and nucleotide exchange. Immobilization of the converter enables RuvB to convert the ATP-contained energy into a lever motion, pulling 2 nucleotides of DNA out of the RuvA tetramer per ATP hydrolyzed, thus driving DNA branch migration. The RuvB motors rotate together with the DNA substrate, which together with the progressing nucleotide cycle form the mechanistic basis for DNA recombination by continuous HJ branch migration. Branch migration allows RuvC to scan DNA until it finds its consensus sequence, where it cleaves and resolves cruciform DNA. This is Holliday junction branch migration complex subunit RuvB from Clostridium tetani (strain Massachusetts / E88).